Reading from the N-terminus, the 325-residue chain is Elongation factor P--(R)-beta-lysine ligase (325 aa).

76 to 78 contributes to the substrate binding site; that stretch reads SPE. ATP is bound by residues 100–102 and Asn-109; that span reads RNE. Position 118 (Tyr-118) interacts with substrate. Residue 244 to 245 coordinates ATP; the sequence is EL. Glu-251 provides a ligand contact to substrate. Position 300 (Gly-300) interacts with ATP.

This sequence belongs to the class-II aminoacyl-tRNA synthetase family. EpmA subfamily. Homodimer.

The enzyme catalyses D-beta-lysine + L-lysyl-[protein] + ATP = N(6)-((3R)-3,6-diaminohexanoyl)-L-lysyl-[protein] + AMP + diphosphate + H(+). With EpmB is involved in the beta-lysylation step of the post-translational modification of translation elongation factor P (EF-P) on 'Lys-34'. Catalyzes the ATP-dependent activation of (R)-beta-lysine produced by EpmB, forming a lysyl-adenylate, from which the beta-lysyl moiety is then transferred to the epsilon-amino group of EF-P 'Lys-34'. The polypeptide is Elongation factor P--(R)-beta-lysine ligase (Salmonella choleraesuis (strain SC-B67)).